The chain runs to 257 residues: Ubiquinone biosynthesis O-methyltransferase (257 aa).

S-adenosyl-L-methionine-binding residues include R43, G77, D98, and M144.

Belongs to the methyltransferase superfamily. UbiG/COQ3 family.

It catalyses the reaction a 3-demethylubiquinol + S-adenosyl-L-methionine = a ubiquinol + S-adenosyl-L-homocysteine + H(+). It carries out the reaction a 3-(all-trans-polyprenyl)benzene-1,2-diol + S-adenosyl-L-methionine = a 2-methoxy-6-(all-trans-polyprenyl)phenol + S-adenosyl-L-homocysteine + H(+). Its pathway is cofactor biosynthesis; ubiquinone biosynthesis. Functionally, O-methyltransferase that catalyzes the 2 O-methylation steps in the ubiquinone biosynthetic pathway. The sequence is that of Ubiquinone biosynthesis O-methyltransferase from Psychrobacter cryohalolentis (strain ATCC BAA-1226 / DSM 17306 / VKM B-2378 / K5).